The sequence spans 423 residues: Serine--tRNA ligase (423 aa).

L-serine is bound at residue 231 to 233 (TAE). 262–264 (RSE) serves as a coordination point for ATP. E285 lines the L-serine pocket. 349–352 (EISS) is an ATP binding site. Residue S384 participates in L-serine binding.

The protein belongs to the class-II aminoacyl-tRNA synthetase family. Type-1 seryl-tRNA synthetase subfamily. Homodimer. The tRNA molecule binds across the dimer.

It is found in the cytoplasm. The catalysed reaction is tRNA(Ser) + L-serine + ATP = L-seryl-tRNA(Ser) + AMP + diphosphate + H(+). It carries out the reaction tRNA(Sec) + L-serine + ATP = L-seryl-tRNA(Sec) + AMP + diphosphate + H(+). It participates in aminoacyl-tRNA biosynthesis; selenocysteinyl-tRNA(Sec) biosynthesis; L-seryl-tRNA(Sec) from L-serine and tRNA(Sec): step 1/1. Its function is as follows. Catalyzes the attachment of serine to tRNA(Ser). Is also able to aminoacylate tRNA(Sec) with serine, to form the misacylated tRNA L-seryl-tRNA(Sec), which will be further converted into selenocysteinyl-tRNA(Sec). This is Serine--tRNA ligase from Lactococcus lactis subsp. cremoris (strain SK11).